Consider the following 576-residue polypeptide: 4-alpha-glucanotransferase, chloroplastic/amyloplastic (576 aa).

Residues 1–52 (MAIHTCFSLIPSSFSSPKLPYPKNTTFQSPIPKLSRPTFMFDRKGSFQNGTA) constitute a chloroplast transit peptide.

The protein belongs to the disproportionating enzyme family. In terms of tissue distribution, present in leaves, stems, roots, and stolons but is most abundant in developing and mature tubers.

The protein resides in the plastid. The protein localises to the chloroplast. It is found in the amyloplast. The enzyme catalyses Transfers a segment of a (1-&gt;4)-alpha-D-glucan to a new position in an acceptor, which may be glucose or a (1-&gt;4)-alpha-D-glucan.. In terms of biological role, may act during starch breakdown to convert small oligosaccharides into larger molecules upon which starch phosphorylase can act, or may change the structure of starch molecules and grain architecture by modifying chain length, or may generate from starch and glucose oligosaccharides which can serve either as primers for new starch phosphoenzyme. The polypeptide is 4-alpha-glucanotransferase, chloroplastic/amyloplastic (DPEP) (Solanum tuberosum (Potato)).